The sequence spans 669 residues: Diacylglycerol lipase-beta (669 aa).

At 1 to 17 (MPGMVLFGRRWSLASDD) the chain is on the cytoplasmic side. A helical transmembrane segment spans residues 18-38 (LVFPGSFELFLRVLWWIVSLT). At 39 to 58 (LYLTHRRRLDCPGGVLLSTY) the chain is on the extracellular side. The chain crosses the membrane as a helical span at residues 59–79 (LIVLLVLLAVIICTVLAIVCV). Residues 80–102 (SMRGTICNPGPRKSMSKLLYIRL) are Cytoplasmic-facing. The helical transmembrane segment at 103–123 (ALFLPEMVWASLGAAWVAKGI) threads the bilayer. Over 124-128 (QCDRT) the chain is Extracellular. A helical membrane pass occupies residues 129–149 (VVIGIIATVIVSWIVIAATMV). At 150 to 669 (TIIFVFDPLG…CPGQGGSSVP (520 aa)) the chain is on the cytoplasmic side. Active-site charge relay system residues include Ser-443 and Asp-495. Phosphoserine occurs at positions 570, 578, and 582.

The protein belongs to the AB hydrolase superfamily. Lipase family. The cofactor is Ca(2+). As to expression, expressed in liver and immune cells such as macrophages and microglias. In embryonic brains present in axonal tracts, while in adults localizes to dendritic fields, correlating with the developmental change in requirement for 2-AG synthesis from the pre- to the postsynaptic compartment (at protein level).

Its subcellular location is the cell membrane. The catalysed reaction is a 1,2-diacyl-sn-glycerol + H2O = a 2-acylglycerol + a fatty acid + H(+). The enzyme catalyses 1-octadecanoyl-2-(5Z,8Z,11Z,14Z-eicosatetraenoyl)-sn-glycerol + H2O = 2-(5Z,8Z,11Z,14Z-eicosatetraenoyl)-glycerol + octadecanoate + H(+). It carries out the reaction 1,2-di-(9Z-octadecenoyl)-sn-glycerol + H2O = 2-(9Z-octadecenoyl)-glycerol + (9Z)-octadecenoate + H(+). It catalyses the reaction 1-(9Z-octadecenoyl)-2-(5Z,8Z,11Z,14Z-eicosatetraenoyl)-sn-glycerol + H2O = 2-(5Z,8Z,11Z,14Z-eicosatetraenoyl)-glycerol + (9Z)-octadecenoate + H(+). The catalysed reaction is 1-(9Z-octadecenoyl)-2-octadecanoyl-sn-glycerol + H2O = 2-octadecanoylglycerol + (9Z)-octadecenoate + H(+). The enzyme catalyses 1-(9Z-octadecenoyl)-2-(9Z,12Z-octadecadienoyl)-sn-glycerol + H2O = 2-(9Z,12Z-octadecadienoyl)-glycerol + (9Z)-octadecenoate + H(+). It carries out the reaction 1-(9Z-octadecenoyl)-2-O-(5Z,8Z,11Z,14Z-eicosatetraenyl)-sn-glycerol + H2O = 2-O-(5Z,8Z,11Z,14Z)-eicosatetraenylglycerol + (9Z)-octadecenoate + H(+). It catalyses the reaction a triacylglycerol + H2O = a diacylglycerol + a fatty acid + H(+). The catalysed reaction is 1,2,3-tri-(5Z,8Z,11Z,14Z-eicosatetraenoyl)-glycerol + H2O = 1,2-di-(5Z,8Z,11Z,14Z-eicosatetraenoyl)-glycerol + (5Z,8Z,11Z,14Z)-eicosatetraenoate + H(+). The enzyme catalyses 1,2,3-(4Z,7Z,10Z,13Z,16Z,19Z-docosahexaenoyl)-glycerol + H2O = 1,2-di-(4Z,7Z,10Z,13Z,16Z,19Z-docosahexaenoyl)-glycerol + (4Z,7Z,10Z,13Z,16Z,19Z)-docosahexaenoate + H(+). Its activity is regulated as follows. Inhibited by the 1,2,3-triazole urea covalent inhibitors KT109 and KT172. Inhibited by p-hydroxy-mercuri-benzoate and HgCl(2), but not by PMSF. Also inhibited by RHC80267, a drug that blocks 2-AG formation. Functionally, lipase that catalyzes the hydrolysis of arachidonic acid (AA)-esterified diacylglycerols (DAGs) to produce the principal endocannabinoid, 2-arachidonoylglycerol (2-AG) which can be further cleaved by downstream enzymes to release arachidonic acid (AA) for cyclooxygenase (COX)-mediated eicosanoid production. Preferentially hydrolyzes DAGs at the sn-1 position in a calcium-dependent manner and has negligible activity against other lipids including monoacylglycerols and phospholipids. Plays a key role in the regulation of 2-AG and AA pools utilized by COX1/2 to generate lipid mediators of macrophage and microglia inflammatory responses. Also functions as a polyunsaturated fatty acids-specific triacylglycerol lipase in macrophages. Plays an important role to support the metabolic and signaling demands of macrophages. The polypeptide is Diacylglycerol lipase-beta (Daglb) (Mus musculus (Mouse)).